A 431-amino-acid polypeptide reads, in one-letter code: Glucose-1-phosphate adenylyltransferase (431 aa).

Lys-39 is a binding site for beta-D-fructose 1,6-bisphosphate. Positions 40, 46, and 52 each coordinate AMP. Tyr-114 lines the alpha-D-glucose 1-phosphate pocket. Arg-130 is an AMP binding site. Residues Gly-179, 194–195 (EK), and Ser-212 each bind alpha-D-glucose 1-phosphate. AMP-binding residues include Glu-370 and Arg-386. Beta-D-fructose 1,6-bisphosphate is bound by residues 419–423 (REMLR) and 429–431 (QER).

Belongs to the bacterial/plant glucose-1-phosphate adenylyltransferase family. Homotetramer.

It carries out the reaction alpha-D-glucose 1-phosphate + ATP + H(+) = ADP-alpha-D-glucose + diphosphate. It participates in glycan biosynthesis; glycogen biosynthesis. Its activity is regulated as follows. Allosterically activated by fructose-1,6-bisphosphate (F16BP) and inhibited by AMP. Functionally, involved in the biosynthesis of ADP-glucose, a building block required for the elongation reactions to produce glycogen. Catalyzes the reaction between ATP and alpha-D-glucose 1-phosphate (G1P) to produce pyrophosphate and ADP-Glc. The sequence is that of Glucose-1-phosphate adenylyltransferase from Shigella dysenteriae serotype 1 (strain Sd197).